The sequence spans 476 residues: Adenosylhomocysteinase (476 aa).

3 residues coordinate substrate: Thr61, Asp140, and Glu200. An NAD(+)-binding site is contributed by 201–203; that stretch reads TTT. Residues Lys230 and Asp234 each contribute to the substrate site. NAD(+) is bound by residues Asn235, 264 to 269, Glu287, Asn322, 343 to 345, and Asn389; these read GYGDVG and IGH.

Belongs to the adenosylhomocysteinase family. NAD(+) serves as cofactor.

Its subcellular location is the cytoplasm. It catalyses the reaction S-adenosyl-L-homocysteine + H2O = L-homocysteine + adenosine. Its pathway is amino-acid biosynthesis; L-homocysteine biosynthesis; L-homocysteine from S-adenosyl-L-homocysteine: step 1/1. Functionally, may play a key role in the regulation of the intracellular concentration of adenosylhomocysteine. This chain is Adenosylhomocysteinase, found in Acidovorax ebreus (strain TPSY) (Diaphorobacter sp. (strain TPSY)).